The chain runs to 321 residues: Malate dehydrogenase (321 aa).

NAD(+) is bound by residues 10–15 (GGGQIG) and aspartate 34. Arginine 83 and arginine 89 together coordinate substrate. NAD(+) is bound by residues asparagine 96 and 119-121 (ISN). Substrate is bound by residues asparagine 121 and arginine 152. Catalysis depends on histidine 176, which acts as the Proton acceptor.

Belongs to the LDH/MDH superfamily. MDH type 3 family.

The catalysed reaction is (S)-malate + NAD(+) = oxaloacetate + NADH + H(+). Catalyzes the reversible oxidation of malate to oxaloacetate. The polypeptide is Malate dehydrogenase (Trichlorobacter lovleyi (strain ATCC BAA-1151 / DSM 17278 / SZ) (Geobacter lovleyi)).